A 98-amino-acid chain; its full sequence is Small ribosomal subunit protein bS6 (98 aa).

Belongs to the bacterial ribosomal protein bS6 family.

Functionally, binds together with bS18 to 16S ribosomal RNA. The protein is Small ribosomal subunit protein bS6 of Staphylococcus carnosus (strain TM300).